We begin with the raw amino-acid sequence, 307 residues long: Nuclear polyadenylated RNA-binding protein nab2 (307 aa).

The disordered stretch occupies residues 102 to 135 (STDKSQQSFSVPETSIQPQSSQTPNITSLREEKE). A compositionally biased stretch (polar residues) spans 105–129 (KSQQSFSVPETSIQPQSSQTPNITS). 3 consecutive C3H1-type zinc fingers follow at residues 178–202 (TQEVPLCKYADKCSRANCIFAHPTP), 217–232 (CASGKECKAADCVKGH), and 254–268 (CKYKPCLNPACRFIH). The segment at 274–307 (NMTWRPPSKTEETSLSERSFAVNESEEQLHVPSV) is disordered.

The protein belongs to the ZC3H14 family.

The protein localises to the nucleus. RNA-binding protein involved in RNA processing. Acts as a regulator of mRNA stability: binds to mRNAs and pre-mRNAs, preventing their degradation. Involved in the biogenesis of circular RNAs (circRNAs) which are produced by back-splicing circularization of pre-mRNAs. The protein is Nuclear polyadenylated RNA-binding protein nab2 of Schizosaccharomyces pombe (strain 972 / ATCC 24843) (Fission yeast).